The following is a 720-amino-acid chain: MDVSYLLDSLNDKQREAVAAPRSNLLVLAGAGSGKTRVLVHRIAWLMSVENCSPYSIMAVTFTNKAAAEMRHRIGQLMGTSQGGMWVGTFHGLAHRLLRAHHMDANLPQDFQILDSEDQLRLLKRLIKAMNLDEKQWPPRQAMWYINSQKDEGLRPHHIQSYGNPVEQTWQKVYQAYQEACDRAGLVDFAELLLRAHELWLNKPHILQHYRERFTNILVDEFQDTNNIQYAWIRLLAGDTGKVMIVGDDDQSIYGWRGAQVENIQRFLNDFPGAETIRLEQNYRSTSNILSAANALIENNNGRLGKKLWTDGADGEPISLYCAFNELDEARFVVNRIKTWQDNGGALAECAILYRSNAQSRVLEEALLQASMPYRIYGGMRFFERQEIKDALSYLRLIANRNDDAAFERVVNTPTRGIGDRTLDVVRQTSRDRQLTLWQACRELLQEKALAGRAASALQRFMELIDALAQETADMPLHVQTDRVIKDSGLRTMYEQEKGEKGQTRIENLEELVTATRQFSYNEEDEDLMPLQAFLSHAALEAGEGQADTWQDAVQLMTLHSAKGLEFPQVFIVGMEEGMFPSQMSLDEGGRLEEERRLAYVGVTRAMQKLTLTYAETRRLYGKEVYHRPSRFIGELPEECVEEVRLRATVSRPVSHQRMGTPMVENDSGYKLGQRVRHAKFGEGTIVNMEGSGEHSRLQVAFQGQGIKWLVAAYARLESV.

The 279-residue stretch at 8 to 286 (DSLNDKQREA…IRLEQNYRST (279 aa)) folds into the UvrD-like helicase ATP-binding domain. Residues 32–37 (GSGKTR) and arginine 284 each bind ATP. The UvrD-like helicase C-terminal domain occupies 287–564 (SNILSAANAL…QLMTLHSAKG (278 aa)).

This sequence belongs to the helicase family. UvrD subfamily.

The catalysed reaction is Couples ATP hydrolysis with the unwinding of duplex DNA by translocating in the 3'-5' direction.. The enzyme catalyses ATP + H2O = ADP + phosphate + H(+). In terms of biological role, a helicase with DNA-dependent ATPase activity. Unwinds DNA duplexes with 3'-5' polarity. Translocates on single-stranded DNA with 3'-5' polarity. Initiates unwinding more efficiently from a nicked substrate than double-stranded DNA. Involved in the post-incision events of nucleotide excision repair and methyl-directed mismatch repair, and probably also in repair of alkylated DNA. The polypeptide is DNA helicase II (Escherichia coli (strain K12)).